Consider the following 83-residue polypeptide: Mu-theraphotoxin-Hhn2b 3 (83 aa).

The signal sequence occupies residues 1 to 21 (MKASMFLALAGLVLLFVVCYA). Residues 22–48 (SESEEKEFPRELISKIFAVDDFKGEVR) constitute a propeptide that is removed on maturation. 3 cysteine pairs are disulfide-bonded: C50–C65, C57–C70, and C64–C77. Residue L81 is modified to Leucine amide.

Belongs to the neurotoxin 10 (Hwtx-1) family. 14 (Hntx-1) subfamily. In terms of assembly, monomer. In terms of tissue distribution, expressed by the venom gland.

The protein localises to the secreted. Its function is as follows. Weakly blocks the rat SCN2A/SCN1B (Nav1.2/beta-1) sodium channel (IC(50)=68 uM) and the insect sodium channel para/tipE (IC(50)=4.3 uM), without altering the activation or inactivation kinetics (depressant toxin). In Cyriopagopus hainanus (Chinese bird spider), this protein is Mu-theraphotoxin-Hhn2b 3.